Here is a 273-residue protein sequence, read N- to C-terminus: 3-methyl-2-oxobutanoate hydroxymethyltransferase (273 aa).

The Mg(2+) site is built by D49 and D88. 3-methyl-2-oxobutanoate contacts are provided by residues 49–50 (DS), D88, and K118. E120 lines the Mg(2+) pocket. The Proton acceptor role is filled by E187.

It belongs to the PanB family. In terms of assembly, homodecamer; pentamer of dimers. It depends on Mg(2+) as a cofactor.

The protein resides in the cytoplasm. It catalyses the reaction 3-methyl-2-oxobutanoate + (6R)-5,10-methylene-5,6,7,8-tetrahydrofolate + H2O = 2-dehydropantoate + (6S)-5,6,7,8-tetrahydrofolate. The protein operates within cofactor biosynthesis; (R)-pantothenate biosynthesis; (R)-pantoate from 3-methyl-2-oxobutanoate: step 1/2. In terms of biological role, catalyzes the reversible reaction in which hydroxymethyl group from 5,10-methylenetetrahydrofolate is transferred onto alpha-ketoisovalerate to form ketopantoate. In Rhizobium etli (strain ATCC 51251 / DSM 11541 / JCM 21823 / NBRC 15573 / CFN 42), this protein is 3-methyl-2-oxobutanoate hydroxymethyltransferase.